Here is a 24-residue protein sequence, read N- to C-terminus: Prokineticin 1-like protein (24 aa).

C7 and C19 form a disulfide bridge.

As to expression, expressed by the skin glands.

It localises to the secreted. Its function is as follows. Stimulates insulin secretion by BRIN-BD11 cells in vitro. This Pelophylax saharicus (Sahara frog) protein is Prokineticin 1-like protein.